The chain runs to 844 residues: MEPPAAPSERSLSLSLPGPREGQATLKPPPQHLWRQPRTPIRIQQRGYPDSAERSETERSPHRPIERADAVDTGDRPGLRTTRMSWPSSFHGTGTGGGSSRRLEAENGPTPSPGRSPLDSQASPGLVLHAGATTSQRRESFLYRSDSDYDMSPKAVSRSSSVASEAHAEDLIVTPFAQVLASLRSVRSNFSLLTNVPIPSNKRSPLGGPPSVCKATLSEETCQQLARETLEELDWCLEQLETMQTYRSVSEMASHKFKRMLNRELTHLSEMSRSGNQVSEYISNTFLDKQNEVEIPSPTPRQRAFQQPPPSVLRQSQPMSQITGLKKLVHTGSLNTNVPRFGVKTDQEDLLAQELENLSKWGLNIFCVSEYAGGRSLSCIMYTIFQERDLLKKFHIPVDTMMMYMLTLEDHYHADVAYHNSLHAADVLQSTHVLLATPALDAVFTDLEILAALFAAAIHDVDHPGVSNQFLINTNSELALMYNDESVLENHHLAVGFKLLQEENCDIFQNLSKRQRQSLRKMVIDMVLATDMSKHMTLLADLKTMVETKKVTSSGVLLLDNYSDRIQVLRNMVHCADLSNPTKPLELYRQWTDRIMAEFFQQGDRERERGMEISPMCDKHTASVEKSQVGFIDYIVHPLWETWADLVHPDAQDILDTLEDNRDWYHSAIRQSPSPPLEEEPGGLGHPSLPDKFQFELTLEEEEEEDSLEVPGLPTTEETFLAAEDARAQAVDWSKVKGPSTTVVEVAERLKQETASAYGAPQESMEAVGCSFSPGTPILPDVRTLSSSEEAPGLLGLPSTAAEVEAPRDHLAATRACSACSGTSGDNSAIISAPGRWGSGGDPA.

Positions 1–124 (MEPPAAPSER…RSPLDSQASP (124 aa)) are disordered. Serine 13 carries the phosphoserine modification. Residues 36 to 46 (QPRTPIRIQQR) show a composition bias toward low complexity. The segment covering 51–78 (SAERSETERSPHRPIERADAVDTGDRPG) has biased composition (basic and acidic residues). Over residues 82–91 (TRMSWPSSFH) the composition is skewed to polar residues. Serine 147 carries the phosphoserine; by MAPKAPK2 modification. Residues serine 152, serine 160, and serine 204 each carry the phosphoserine modification. Positions 296-317 (PSPTPRQRAFQQPPPSVLRQSQ) are disordered. Serine 333 is subject to Phosphoserine. Positions 343 to 672 (VKTDQEDLLA…DWYHSAIRQS (330 aa)) constitute a PDEase domain. Lysine 344 is covalently cross-linked (Glycyl lysine isopeptide (Lys-Gly) (interchain with G-Cter in SUMO)). Residue histidine 419 is the Proton donor of the active site. Position 419 (histidine 419) interacts with 3',5'-cyclic AMP. AMP contacts are provided by histidine 419 and histidine 423. The Zn(2+) site is built by histidine 423, histidine 459, aspartate 460, and aspartate 577. AMP-binding residues include aspartate 460, aspartate 577, glutamine 628, and phenylalanine 631. Residue aspartate 460 coordinates Mg(2+). Aspartate 460 lines the Mn(2+) pocket. 3',5'-cyclic AMP contacts are provided by glutamine 628 and phenylalanine 631. Disordered stretches follow at residues 668–690 (AIRQ…PSLP) and 818–844 (SACS…GDPA). Phosphoserine is present on residues serine 672 and serine 674. The segment covering 820–830 (CSGTSGDNSAI) has biased composition (polar residues).

The protein belongs to the cyclic nucleotide phosphodiesterase family. PDE4 subfamily. Interacts with LYN (via SH3 domain). Interacts with ARRB2. Requires Zn(2+) as cofactor. Mg(2+) is required as a cofactor. It depends on Mn(2+) as a cofactor. In terms of processing, phosphorylated by MAPKAPK2 at Ser-147; it counteracts PKA-induced activation of PDE4A and modulates intracellular cAMP levels. Likely involved in cellular desensitization to cAMP signaling. Post-translationally, proteolytically cleaved by CASP3. In terms of tissue distribution, isoform 2 is testis specific.

The protein localises to the cytoplasm. It localises to the cytosol. The protein resides in the membrane. It carries out the reaction 3',5'-cyclic AMP + H2O = AMP + H(+). It participates in purine metabolism; 3',5'-cyclic AMP degradation; AMP from 3',5'-cyclic AMP: step 1/1. Its activity is regulated as follows. Inhibited by rolipram. Its function is as follows. Hydrolyzes the second messenger 3',5'-cyclic AMP (cAMP), which is a key regulator of many important physiological processes. Efficiently hydrolyzes cAMP. The sequence is that of 3',5'-cyclic-AMP phosphodiesterase 4A (Pde4a) from Rattus norvegicus (Rat).